We begin with the raw amino-acid sequence, 206 residues long: Large ribosomal subunit protein uL4 (206 aa).

The disordered stretch occupies residues 48-97; sequence THAVKNRSLVSGGGKKPWKQKHTGRARQGSTRASQWVGGGKAMGPKPRDY. The segment covering 63–72 has biased composition (basic residues); the sequence is KPWKQKHTGR.

It belongs to the universal ribosomal protein uL4 family. In terms of assembly, part of the 50S ribosomal subunit.

Functionally, one of the primary rRNA binding proteins, this protein initially binds near the 5'-end of the 23S rRNA. It is important during the early stages of 50S assembly. It makes multiple contacts with different domains of the 23S rRNA in the assembled 50S subunit and ribosome. Its function is as follows. Forms part of the polypeptide exit tunnel. This chain is Large ribosomal subunit protein uL4, found in Anaeromyxobacter sp. (strain K).